A 151-amino-acid polypeptide reads, in one-letter code: Small ribosomal subunit protein uS9 (151 aa).

A compositionally biased stretch (low complexity) spans 1 to 19 (MTETTPAPQTPAAPAGPAQ). Disordered stretches follow at residues 1 to 20 (MTET…PAQS) and 121 to 151 (KAGF…YSKR). Basic and acidic residues predominate over residues 127-136 (RDPRATERKK). Positions 137–151 (YGLKKARKAPQYSKR) are enriched in basic residues.

It belongs to the universal ribosomal protein uS9 family.

This is Small ribosomal subunit protein uS9 (rpsI) from Mycobacterium bovis (strain ATCC BAA-935 / AF2122/97).